The sequence spans 201 residues: Histone chaperone asf1a-A (201 aa).

It belongs to the ASF1 family. As to quaternary structure, interacts with histone H3 (including both histone H3.1 and H3.3) and histone H4. Interacts with hira and p60.

The protein resides in the nucleus. In terms of biological role, histone chaperone that facilitates histone deposition and histone exchange and removal during nucleosome assembly and disassembly. Not critical for histone deposition during nucleosome assembly. The chain is Histone chaperone asf1a-A (asf1aa) from Xenopus laevis (African clawed frog).